Consider the following 1181-residue polypeptide: Poly [ADP-ribose] polymerase tankyrase (1181 aa).

ANK repeat units lie at residues 56-85 (RKSTPLHFAAGYGRREVVEFLLNSGASIQA), 89-118 (GGLHPLHNCCSFGHAEVVRLLLKAGASPNT), 122-151 (WNYTPLHEAASKGKVDVCLALLQHGANHTI), 209-238 (RRSTPLHLAAGYNRIGIVEILLANGADVHA), 242-271 (GGLVPLHNACSYGHFDVTKLLIQAGANVNA), 275-304 (WAFTPLHEAASKSRVEVCSLLLSRGADPTL), 362-394 (TGDTPLHLAVVSPDGKRKQLMELLTRKGSLLNE), 398-427 (AFLTPLHLAAELLHYDAMEVLLKQGAKVNA), 431-458 (LGQTPLHRCARDEQAVRLLLSYAADTNI), 483-513 (DSETHLLEAAKAGDLDTVRRIVLNNPISVNC), 519-548 (RHSTPLHFAAGFNRVPVVQFLLEHGAEVYA), 552-581 (GGLVPLHNACSYGHYEVTELLVKHGANVNV), 585-614 (WKFTPLHEAAAKGKYDICKLLLKHGADPMK), 638-668 (RGPSALLDAAKKGNLARVQRLVTPESINCRD), 672-701 (RNSTPLHLAAGYNNFECAEYLLENGADVNA), 705-734 (GGLIPLHNASSYGHLDIAALLIKHKTVVNA), 738-767 (WGFTPLHEAAQKGRTQLCSLLLAHGADAYM), and 771-799 (EGQTPIELATADDVKCLLQDAMATSLSQQ). 2 disordered regions span residues 807-834 (SLTSSSPAPDATAAAAPGTSSSSSSAIL) and 864-886 (RISPAQGAEANGAEGSSSDDLLP). The SAM domain maps to 889-952 (DTITNVSGFL…LKGIAQLRST (64 aa)). The PARP catalytic domain maps to 969–1174 (LPDDKEFVAV…YQIVKPDDSS (206 aa)). 4 residues coordinate Zn(2+): Cys-1091, His-1094, Cys-1099, and Cys-1102.

This sequence belongs to the ARTD/PARP family. In terms of assembly, interacts (via ANK repeats) with PI31.

The enzyme catalyses NAD(+) + (ADP-D-ribosyl)n-acceptor = nicotinamide + (ADP-D-ribosyl)n+1-acceptor + H(+).. It catalyses the reaction L-aspartyl-[protein] + NAD(+) = 4-O-(ADP-D-ribosyl)-L-aspartyl-[protein] + nicotinamide. The catalysed reaction is L-glutamyl-[protein] + NAD(+) = 5-O-(ADP-D-ribosyl)-L-glutamyl-[protein] + nicotinamide. In terms of biological role, stimulates proteasome activity, probably by ADP-ribosylation of PI31. Modulates 26S proteasome assembly. The sequence is that of Poly [ADP-ribose] polymerase tankyrase from Drosophila melanogaster (Fruit fly).